We begin with the raw amino-acid sequence, 204 residues long: N-(5'-phosphoribosyl)anthranilate isomerase (204 aa).

This sequence belongs to the TrpF family.

The enzyme catalyses N-(5-phospho-beta-D-ribosyl)anthranilate = 1-(2-carboxyphenylamino)-1-deoxy-D-ribulose 5-phosphate. It participates in amino-acid biosynthesis; L-tryptophan biosynthesis; L-tryptophan from chorismate: step 3/5. The chain is N-(5'-phosphoribosyl)anthranilate isomerase from Geobacter sp. (strain M21).